Here is a 415-residue protein sequence, read N- to C-terminus: Serine hydroxymethyltransferase (415 aa).

(6S)-5,6,7,8-tetrahydrofolate contacts are provided by residues L121 and 125–127 (GHL). K229 is modified (N6-(pyridoxal phosphate)lysine).

This sequence belongs to the SHMT family. Homodimer. Pyridoxal 5'-phosphate serves as cofactor.

The protein resides in the cytoplasm. It catalyses the reaction (6R)-5,10-methylene-5,6,7,8-tetrahydrofolate + glycine + H2O = (6S)-5,6,7,8-tetrahydrofolate + L-serine. The protein operates within one-carbon metabolism; tetrahydrofolate interconversion. Its pathway is amino-acid biosynthesis; glycine biosynthesis; glycine from L-serine: step 1/1. In terms of biological role, catalyzes the reversible interconversion of serine and glycine with tetrahydrofolate (THF) serving as the one-carbon carrier. This reaction serves as the major source of one-carbon groups required for the biosynthesis of purines, thymidylate, methionine, and other important biomolecules. Also exhibits THF-independent aldolase activity toward beta-hydroxyamino acids, producing glycine and aldehydes, via a retro-aldol mechanism. The sequence is that of Serine hydroxymethyltransferase from Bordetella petrii (strain ATCC BAA-461 / DSM 12804 / CCUG 43448).